The following is a 260-amino-acid chain: Thiamine thiazole synthase (260 aa).

Residues Ala-36, 55-56, Gly-63, and 154-156 each bind NAD(+); these read EQ and HVD. Fe cation contacts are provided by Asp-156 and His-171. An NAD(+)-binding site is contributed by Met-224. Arg-234 contributes to the glycine binding site.

It belongs to the THI4 family. Homooctamer; tetramer of dimers. The cofactor is Fe(2+).

It catalyses the reaction hydrogen sulfide + glycine + NAD(+) = ADP-5-ethyl-4-methylthiazole-2-carboxylate + nicotinamide + 3 H2O + H(+). It functions in the pathway cofactor biosynthesis; thiamine diphosphate biosynthesis. Its function is as follows. Involved in the biosynthesis of the thiazole moiety of thiamine. Catalyzes the conversion of NAD and glycine to adenosine diphosphate 5-(2-hydroxyethyl)-4-methylthiazole-2-carboxylate (ADT), an adenylated thiazole intermediate, using free sulfide as a source of sulfur. The polypeptide is Thiamine thiazole synthase (Methanosarcina barkeri (strain Fusaro / DSM 804)).